Consider the following 508-residue polypeptide: Light-independent protochlorophyllide reductase subunit B (508 aa).

Asp-36 lines the [4Fe-4S] cluster pocket. Asp-294 (proton donor) is an active-site residue. Gly-429 to Met-430 is a substrate binding site.

It belongs to the ChlB/BchB/BchZ family. Protochlorophyllide reductase is composed of three subunits; ChlL, ChlN and ChlB. Forms a heterotetramer of two ChlB and two ChlN subunits. The cofactor is [4Fe-4S] cluster.

It carries out the reaction chlorophyllide a + oxidized 2[4Fe-4S]-[ferredoxin] + 2 ADP + 2 phosphate = protochlorophyllide a + reduced 2[4Fe-4S]-[ferredoxin] + 2 ATP + 2 H2O. It functions in the pathway porphyrin-containing compound metabolism; chlorophyll biosynthesis (light-independent). Functionally, component of the dark-operative protochlorophyllide reductase (DPOR) that uses Mg-ATP and reduced ferredoxin to reduce ring D of protochlorophyllide (Pchlide) to form chlorophyllide a (Chlide). This reaction is light-independent. The NB-protein (ChlN-ChlB) is the catalytic component of the complex. The polypeptide is Light-independent protochlorophyllide reductase subunit B (Thermosynechococcus vestitus (strain NIES-2133 / IAM M-273 / BP-1)).